Here is a 516-residue protein sequence, read N- to C-terminus: tRNA-guanine(15) transglycosylase (516 aa).

D93 (nucleophile) is an active-site residue. Residues D128 and A196 each coordinate substrate. C279, C281, and C284 together coordinate Zn(2+). Low complexity predominate over residues 488-502 (LSAVSERLGDEASVG). The interval 488–516 (LSAVSERLGDEASVGGDDGDDGGSASSAE) is disordered.

Belongs to the archaeosine tRNA-ribosyltransferase family. Zn(2+) serves as cofactor.

It catalyses the reaction guanosine(15) in tRNA + 7-cyano-7-deazaguanine = 7-cyano-7-carbaguanosine(15) in tRNA + guanine. It functions in the pathway tRNA modification; archaeosine-tRNA biosynthesis. In terms of biological role, exchanges the guanine residue with 7-cyano-7-deazaguanine (preQ0) at position 15 in the dihydrouridine loop (D-loop) of archaeal tRNAs. The sequence is that of tRNA-guanine(15) transglycosylase from Haloferax volcanii (strain ATCC 29605 / DSM 3757 / JCM 8879 / NBRC 14742 / NCIMB 2012 / VKM B-1768 / DS2) (Halobacterium volcanii).